Consider the following 197-residue polypeptide: Imidazoleglycerol-phosphate dehydratase (197 aa).

This sequence belongs to the imidazoleglycerol-phosphate dehydratase family.

It localises to the cytoplasm. It catalyses the reaction D-erythro-1-(imidazol-4-yl)glycerol 3-phosphate = 3-(imidazol-4-yl)-2-oxopropyl phosphate + H2O. Its pathway is amino-acid biosynthesis; L-histidine biosynthesis; L-histidine from 5-phospho-alpha-D-ribose 1-diphosphate: step 6/9. The protein is Imidazoleglycerol-phosphate dehydratase of Stutzerimonas stutzeri (strain A1501) (Pseudomonas stutzeri).